A 464-amino-acid polypeptide reads, in one-letter code: MFMKATETMICLVDGEHYLPVTRAAVETLDSMEHIDVKALIFIGGTEKLRTSSPEEYTEIMGRPVHFGDDPHRIPYKLIGELIRKYGADTVMDLSDEPVLDYSKRFRIASVVLGEGAVYRGPDFEFQPLTEYDILEKPSLKILGTGKRIGKTAVSAYAARLIHERQYNPCVVAMGRGGPEEPEIVHGDRIEITPEFLMEQSDKGVHAASDHWEDALMSRILTVGCRRCGGGMVGDVFITNMKRGAETANRLDADFVILEGSGAAIPPVKSNRHIVLVGANQPLINIKNFFGPFRIGLADLVIVTMCEEPMAGDEKVREIVDFIESINPEAEVITTVFRPKPLGEIEGKNVLFATTAPDSVKDLLVEYLESEYSCRVVGTTPHLSNRPLLQRDIERYIEDADVMLTELKAAAVDVATKDALEAGLEVIYCDNIPVVRDGAQDELDDAIISVVERAIADFNLRKTP.

The protein belongs to the cyclic 2,3-diphosphoglycerate synthetase family.

It is found in the cytoplasm. It catalyses the reaction (2R)-2,3-bisphosphoglycerate + ATP + H(+) = cyclic (2R)-2,3-bisphosphoglycerate + ADP + phosphate. Activity decreases in response to phosphate limitation. Catalyzes the formation of cyclic 2,3-diphosphoglycerate (cDPG) by formation of an intramolecular phosphoanhydride bond at the expense of ATP. Not able to catalyze cDPG hydrolysis. May be involved in osmotic balance. This chain is Cyclic 2,3-diphosphoglycerate synthetase (cpgS), found in Methanothermobacter thermautotrophicus (strain ATCC 29096 / DSM 1053 / JCM 10044 / NBRC 100330 / Delta H) (Methanobacterium thermoautotrophicum).